Consider the following 220-residue polypeptide: Metalloproteinase inhibitor 2 (220 aa).

The N-terminal stretch at 1–26 is a signal peptide; sequence MGAAARSLRLALGLLLLATLPRPADA. A Zn(2+)-binding site is contributed by Cys27. 2 involved in metalloproteinase-binding regions span residues 27 to 30 and 95 to 96; these read CSCS and SA. 6 disulfides stabilise this stretch: Cys27–Cys98, Cys29–Cys127, Cys39–Cys152, Cys154–Cys201, Cys159–Cys164, and Cys172–Cys193. The region spanning 27-152 is the NTR domain; sequence CSCSPVHPQQ…SLNHRYQMGC (126 aa).

It belongs to the protease inhibitor I35 (TIMP) family. Interacts (via the C-terminal) with MMP2 (via the C-terminal PEX domain); the interaction inhibits the MMP2 activity. Post-translationally, the activity of TIMP2 is dependent on the presence of disulfide bonds.

The protein resides in the secreted. Complexes with metalloproteinases (such as collagenases) and irreversibly inactivates them by binding to their catalytic zinc cofactor. This is Metalloproteinase inhibitor 2 (TIMP2) from Canis lupus familiaris (Dog).